Here is an 87-residue protein sequence, read N- to C-terminus: Diazepam-binding inhibitor-like 5 (87 aa).

The ACB domain occupies 2–87 (SQVEFEMACA…VEELKKNETC (86 aa)). An acyl-CoA contacts are provided by residues 29–33 (YSFYK), lysine 55, and tyrosine 74.

The protein belongs to the ACBP family. As to expression, testis.

Its subcellular location is the cytoplasm. May be involved in the energy metabolism of the mature sperm. This is Diazepam-binding inhibitor-like 5 (Dbil5) from Rattus norvegicus (Rat).